The primary structure comprises 357 residues: UDP-N-acetylglucosamine--N-acetylmuramyl-(pentapeptide) pyrophosphoryl-undecaprenol N-acetylglucosamine transferase (357 aa).

UDP-N-acetyl-alpha-D-glucosamine-binding positions include 13-15 (TGG), N125, R161, S189, I243, and Q288.

This sequence belongs to the glycosyltransferase 28 family. MurG subfamily.

Its subcellular location is the cell inner membrane. The enzyme catalyses di-trans,octa-cis-undecaprenyl diphospho-N-acetyl-alpha-D-muramoyl-L-alanyl-D-glutamyl-meso-2,6-diaminopimeloyl-D-alanyl-D-alanine + UDP-N-acetyl-alpha-D-glucosamine = di-trans,octa-cis-undecaprenyl diphospho-[N-acetyl-alpha-D-glucosaminyl-(1-&gt;4)]-N-acetyl-alpha-D-muramoyl-L-alanyl-D-glutamyl-meso-2,6-diaminopimeloyl-D-alanyl-D-alanine + UDP + H(+). It functions in the pathway cell wall biogenesis; peptidoglycan biosynthesis. Functionally, cell wall formation. Catalyzes the transfer of a GlcNAc subunit on undecaprenyl-pyrophosphoryl-MurNAc-pentapeptide (lipid intermediate I) to form undecaprenyl-pyrophosphoryl-MurNAc-(pentapeptide)GlcNAc (lipid intermediate II). The protein is UDP-N-acetylglucosamine--N-acetylmuramyl-(pentapeptide) pyrophosphoryl-undecaprenol N-acetylglucosamine transferase of Bordetella petrii (strain ATCC BAA-461 / DSM 12804 / CCUG 43448).